A 632-amino-acid chain; its full sequence is Phosphomethylpyrimidine synthase (632 aa).

Residues Asn237, Met266, Tyr295, His331, 351 to 353 (SRG), 392 to 395 (DGLR), and Glu431 contribute to the substrate site. His435 serves as a coordination point for Zn(2+). Tyr458 is a binding site for substrate. Position 499 (His499) interacts with Zn(2+). Residues Cys579, Cys582, and Cys587 each contribute to the [4Fe-4S] cluster site.

Belongs to the ThiC family. Homodimer. [4Fe-4S] cluster serves as cofactor.

It carries out the reaction 5-amino-1-(5-phospho-beta-D-ribosyl)imidazole + S-adenosyl-L-methionine = 4-amino-2-methyl-5-(phosphooxymethyl)pyrimidine + CO + 5'-deoxyadenosine + formate + L-methionine + 3 H(+). Its pathway is cofactor biosynthesis; thiamine diphosphate biosynthesis. Its function is as follows. Catalyzes the synthesis of the hydroxymethylpyrimidine phosphate (HMP-P) moiety of thiamine from aminoimidazole ribotide (AIR) in a radical S-adenosyl-L-methionine (SAM)-dependent reaction. This Nitrosomonas eutropha (strain DSM 101675 / C91 / Nm57) protein is Phosphomethylpyrimidine synthase.